Here is a 311-residue protein sequence, read N- to C-terminus: UPF0324 membrane protein VV1_3166 (311 aa).

A run of 10 helical transmembrane segments spans residues 8–28, 51–71, 74–94, 106–126, 133–153, 165–185, 197–217, 228–248, 256–276, and 289–309; these read FIFA…ALVL, LLSY…AIAV, DGIG…FLVA, LISA…APAI, IALA…IFPV, FGTW…AASA, LKLA…ILFA, LVLP…DLFP, GIFS…GCSI, and LIFG…WLLL.

This sequence belongs to the UPF0324 family.

Its subcellular location is the cell membrane. The polypeptide is UPF0324 membrane protein VV1_3166 (Vibrio vulnificus (strain CMCP6)).